The sequence spans 418 residues: Tryptophan synthase beta chain (418 aa).

Positions 1–18 (MTSTLPKASQPDPSSLQP) are enriched in polar residues. A disordered region spans residues 1–28 (MTSTLPKASQPDPSSLQPSARPGAHGRF). The residue at position 111 (Lys111) is an N6-(pyridoxal phosphate)lysine.

Belongs to the TrpB family. As to quaternary structure, tetramer of two alpha and two beta chains. Requires pyridoxal 5'-phosphate as cofactor.

It catalyses the reaction (1S,2R)-1-C-(indol-3-yl)glycerol 3-phosphate + L-serine = D-glyceraldehyde 3-phosphate + L-tryptophan + H2O. It functions in the pathway amino-acid biosynthesis; L-tryptophan biosynthesis; L-tryptophan from chorismate: step 5/5. The beta subunit is responsible for the synthesis of L-tryptophan from indole and L-serine. The sequence is that of Tryptophan synthase beta chain from Synechococcus sp. (strain CC9902).